A 155-amino-acid polypeptide reads, in one-letter code: Small ribosomal subunit protein bS6 (155 aa).

The tract at residues 94–155 (EEHETEPSAM…RDDNSDGGQE (62 aa)) is disordered. The segment covering 107–149 (RGDRGDRGDRRGGDRFGDRDRGDRGDRGSSRFGDRERPRRDDN) has biased composition (basic and acidic residues).

This sequence belongs to the bacterial ribosomal protein bS6 family.

Binds together with bS18 to 16S ribosomal RNA. The protein is Small ribosomal subunit protein bS6 of Parvibaculum lavamentivorans (strain DS-1 / DSM 13023 / NCIMB 13966).